The sequence spans 344 residues: Protein pelota homolog (344 aa).

The protein belongs to the eukaryotic release factor 1 family. Pelota subfamily. In terms of assembly, monomer. A divalent metal cation is required as a cofactor.

It is found in the cytoplasm. Functionally, may function in recognizing stalled ribosomes, interact with stem-loop structures in stalled mRNA molecules, and effect endonucleolytic cleavage of the mRNA. May play a role in the release non-functional ribosomes and degradation of damaged mRNAs. Has endoribonuclease activity. This is Protein pelota homolog from Saccharolobus islandicus (strain Y.N.15.51 / Yellowstone #2) (Sulfolobus islandicus).